Here is a 247-residue protein sequence, read N- to C-terminus: MASSDKVPVACPASSGDGKEPMGNPTKTTTAMLEKGTAMMQSMKPIRQMSLHVCSFACYSHDPGRQIEVHIYGHRVNQDFLQCAVYDSNSSKAHLIGIEYIVSEKLFESLSPEEQKLWHSHDYEIQMALLVTPRVPELVAKPELKNLAKSYGKFWCTWQIDRGDKLPLGVPSLMVSPQDVNLGRIKPELVKKRDEEHGISTESLKPSRDGICGPEKKNLVADYWVRFRKGFALDVVETDMKRTAPFP.

The segment at 1–28 (MASSDKVPVACPASSGDGKEPMGNPTKT) is disordered.

Belongs to the OBAP family.

This is Oil body-associated protein 2B from Arabidopsis thaliana (Mouse-ear cress).